Here is a 468-residue protein sequence, read N- to C-terminus: Beta-monoglucosyldiacylglycerol synthase (468 aa).

Transmembrane regions (helical) follow at residues 51–71, 72–92, 358–378, and 387–407; these read AALV…VSWG, SIFI…VVFA, MLMF…DLLM, and MLGP…FAGL.

It belongs to the glycosyltransferase 2 family. It depends on Mg(2+) as a cofactor.

It is found in the membrane. It carries out the reaction a 1,2-diacyl-sn-glycerol + UDP-alpha-D-glucose = a 1,2-diacyl-3-O-(beta-D-glucopyranosyl)-sn-glycerol + UDP + H(+). Its function is as follows. Glucosyltransferase involved in the biosynthesis of the non-bilayer-forming membrane lipid beta-monoglucosyldiacylglycerol which contributes to regulate the properties and stability of the membrane. Catalyzes the transfer of a glucosyl residue from UDP-Glc to diacylglycerol (DAG) acceptor to form the corresponding beta-glucosyl-DAG (1,2-diacyl-3-O-(beta-D-glucopyranosyl)-sn-glycerol). It can only use UDP-Glc as sugar donor. Two types of DAG (dipalmitoyl-DAG (DPDAG) and 1-oleoyl-2-palmitoyl-DAG (OPDAG)) can be used as sugar acceptors, but OPDAG is preferred. The protein is Beta-monoglucosyldiacylglycerol synthase of Nostoc sp. (strain PCC 7120 / SAG 25.82 / UTEX 2576).